The primary structure comprises 289 residues: Phosphoribulokinase (289 aa).

12–20 (GSSGAGTTT) contributes to the ATP binding site.

This sequence belongs to the phosphoribulokinase family.

It carries out the reaction D-ribulose 5-phosphate + ATP = D-ribulose 1,5-bisphosphate + ADP + H(+). It participates in carbohydrate biosynthesis; Calvin cycle. This chain is Phosphoribulokinase (cbbP), found in Rhizobium meliloti (strain 1021) (Ensifer meliloti).